The following is a 368-amino-acid chain: MSFDSIPILDLSLARNEETKPAFLRDLRHTLLEVGFLYIKNTGIPETLISDVIAQGKAFFDLPDEEKLAIEMKNKPSFLGYSRLGMEVTRFKVDWREQLDLSTPHPMPGPDDPLYYNLLAPNQWPSTPGFREVYEDYMTRMGKMSIEFTSLIAEAIGLPADAFDRFFDASQQHKLKIVKYPDLAELGVEGEAQGVGPHKDSMLTSYLLQASHHRGLQVQNHEGEWIDCPPIDGTLVVAVGQGMQALTRGVCLSTTHRVLSPARGAGARYSIPFFQGVSYDATFESMDVPESVTALRDEVQARRGAKQDDVEFTFRPGQWDHLGSATLYNRIKSHPDVGEKWDQYPEILAGIRKQHAQQGHVSEALPSG.

Residues 171-277 (QQHKLKIVKY…RYSIPFFQGV (107 aa)) form the Fe2OG dioxygenase domain. 3 residues coordinate Fe cation: H198, D200, and H256. Position 268 (R268) interacts with 2-oxoglutarate.

The protein belongs to the iron/ascorbate-dependent oxidoreductase family.

Its pathway is antifungal biosynthesis. Functionally, 2-oxoglutarate-dependent dioxygenase; part of the gene cluster that mediates the biosynthesis of the antifungal antibiotic FR901469, an inhibitor of beta-1,3-glucansynthase, exerting antifungal activity against the pathogenes Candida albicans and Aspergillus fumigatus. FR901469 is a cyclic depsipeptide containing 12 amino acid residues and a fatty acid chain. The NRPS frbI contains 12 modules responsible for the formation of the depsipeptide backbone which is denoted as Acyl-Thr-Ala-Tyr-Val-4OHPro-Thr-Thr-3OHPro-threo3OHGln-Gly-Thr-Orn-OH (C71H116N14O23). The PKS frbB is probably involved in the production of the hydrocarbon chain, and the acyl-CoA ligase frbC might be involved in the transport of the chain to the peptide ptoduct of frbI. Because FR901469 contains 3 hydroxylated amino acid residues, the 3 oxygenases frbA, frbH, and frbJ might be participating in amino acid hydroxylation. As no thioesterase domains were detected in frbI or frbB, the thioesterases frbD and frbE may instead release and cyclize the products of the NRPS and PKS, respectively. This is 2-oxoglutarate-dependent dioxygenase frbJ from Dothideomycetidae sp. (strain 11243) (Fungal sp. (strain No.11243)).